The primary structure comprises 149 residues: Thioredoxin-like protein 4B (149 aa).

It belongs to the DIM1 family. In terms of assembly, homodimer. Interacts with the U5-102 kDa protein subunit of the spliceosome.

Its subcellular location is the nucleus. In terms of biological role, essential role in pre-mRNA splicing. Required in cell cycle progression for S/G(2) transition. The sequence is that of Thioredoxin-like protein 4B (Txnl4b) from Mus musculus (Mouse).